Reading from the N-terminus, the 303-residue chain is Glycine--tRNA ligase alpha subunit (303 aa).

Belongs to the class-II aminoacyl-tRNA synthetase family. As to quaternary structure, tetramer of two alpha and two beta subunits.

It is found in the cytoplasm. It catalyses the reaction tRNA(Gly) + glycine + ATP = glycyl-tRNA(Gly) + AMP + diphosphate. This is Glycine--tRNA ligase alpha subunit from Klebsiella pneumoniae (strain 342).